A 215-amino-acid polypeptide reads, in one-letter code: Ankyrin repeat domain-containing protein 49 (215 aa).

ANK repeat units lie at residues D81–A110 and L114–A143.

Interacts with Bdbt; interaction promotes the stability of both complex members.

Its subcellular location is the cytoplasm. The protein resides in the cytosol. It is found in the cell membrane. Functionally, required for regulating the establishment of planar cell polarity in the wing. Forms a complex with Bdbt which likely functions in the regulation of planar polarity by promoting the activity of Dco during planar polarity establishment. Within the complex, probably functions to stabilize Bdbt, while Bdbt directly promotes Dco activity in regulating phosphorylation of core proteins such as dsh, and asymmetric localization. The sequence is that of Ankyrin repeat domain-containing protein 49 from Drosophila melanogaster (Fruit fly).